The sequence spans 286 residues: Pantothenate synthetase (286 aa).

30–37 contributes to the ATP binding site; that stretch reads MGNLHAGH. The active-site Proton donor is H37. Residue Q61 coordinates (R)-pantoate. A beta-alanine-binding site is contributed by Q61. 149-152 is an ATP binding site; the sequence is GEKD. Q155 lines the (R)-pantoate pocket. Residues V178 and 186-189 contribute to the ATP site; that span reads MSSR.

Belongs to the pantothenate synthetase family. In terms of assembly, homodimer.

Its subcellular location is the cytoplasm. The enzyme catalyses (R)-pantoate + beta-alanine + ATP = (R)-pantothenate + AMP + diphosphate + H(+). It functions in the pathway cofactor biosynthesis; (R)-pantothenate biosynthesis; (R)-pantothenate from (R)-pantoate and beta-alanine: step 1/1. Its function is as follows. Catalyzes the condensation of pantoate with beta-alanine in an ATP-dependent reaction via a pantoyl-adenylate intermediate. This chain is Pantothenate synthetase, found in Methylococcus capsulatus (strain ATCC 33009 / NCIMB 11132 / Bath).